An 85-amino-acid polypeptide reads, in one-letter code: Sec-independent protein translocase protein TatA (85 aa).

The helical transmembrane segment at Val7–Phe27 threads the bilayer. Residues Leu50–Ala85 are disordered. Over residues Glu64–Thr76 the composition is skewed to basic and acidic residues.

The protein belongs to the TatA/E family. Forms a complex with TatC.

The protein localises to the cell inner membrane. Functionally, part of the twin-arginine translocation (Tat) system that transports large folded proteins containing a characteristic twin-arginine motif in their signal peptide across membranes. TatA could form the protein-conducting channel of the Tat system. In Leptospira interrogans serogroup Icterohaemorrhagiae serovar Lai (strain 56601), this protein is Sec-independent protein translocase protein TatA.